The sequence spans 144 residues: Eukaryotic translation initiation factor 1A, Y-chromosomal (144 aa).

Basic residues predominate over residues 1-15 (MPKNKGKGGKNRRRG). The segment at 1–26 (MPKNKGKGGKNRRRGKNENESEKREL) is disordered. Residues 16–26 (KNENESEKREL) show a composition bias toward basic and acidic residues. Residues 22-96 (EKRELVFKED…NKADVILKYN (75 aa)) enclose the S1-like domain. Lys88 is covalently cross-linked (Glycyl lysine isopeptide (Lys-Gly) (interchain with G-Cter in ubiquitin)). Residues 114-144 (KINETDTFGPGDDDEIQFDDIGDDDEDIDDI) are disordered. Over residues 124-144 (GDDDEIQFDDIGDDDEDIDDI) the composition is skewed to acidic residues.

Belongs to the eIF-1A family. Component of the 43S pre-initiation complex (43S PIC), which is composed of the 40S ribosomal subunit, EIF1, eIF1A (EIF1AX), eIF3 complex, EIF5 and eIF2-GTP-initiator tRNA complex (eIF2 ternary complex). Interacts with EIF5; this interaction contributes to the maintenance of EIF1 within the open 43S PIC. Interacts through its C-terminal domain (CTD) with the CTD of EIF5B; from the location of the start codon by the 43S complex until the formation of the 80S complex. As to expression, ubiquitous.

It is found in the cytoplasm. Functionally, component of the 43S pre-initiation complex (43S PIC), which binds to the mRNA cap-proximal region, scans mRNA 5'-untranslated region, and locates the initiation codon. This protein enhances formation of the cap-proximal complex. Together with EIF1, facilitates scanning, start codon recognition, promotion of the assembly of 48S complex at the initiation codon (43S PIC becomes 48S PIC after the start codon is reached), and dissociation of aberrant complexes. After start codon location, together with EIF5B orients the initiator methionine-tRNA in a conformation that allows 60S ribosomal subunit joining to form the 80S initiation complex. Is released after 80S initiation complex formation, just after GTP hydrolysis by EIF5B, and before release of EIF5B. Its globular part is located in the A site of the 40S ribosomal subunit. Its interaction with EIF5 during scanning contribute to the maintenance of EIF1 within the open 43S PIC. In contrast to yeast orthologs, does not bind EIF1. The chain is Eukaryotic translation initiation factor 1A, Y-chromosomal (EIF1AY) from Homo sapiens (Human).